A 382-amino-acid chain; its full sequence is Mannitol-1-phosphate 5-dehydrogenase (382 aa).

4-15 (AVHFGAGNIGRG) lines the NAD(+) pocket.

It belongs to the mannitol dehydrogenase family.

The enzyme catalyses D-mannitol 1-phosphate + NAD(+) = beta-D-fructose 6-phosphate + NADH + H(+). The chain is Mannitol-1-phosphate 5-dehydrogenase from Vibrio parahaemolyticus serotype O3:K6 (strain RIMD 2210633).